The primary structure comprises 203 residues: Proline-rich protein 1 (203 aa).

Residues 1–20 (MMKLGLYLTLLFLSVWTVSG) form the signal peptide.

As to expression, component of the acid-insoluble and acid-soluble organic matrix of calcified layers of the shell (at protein level).

The protein resides in the secreted. The sequence is that of Proline-rich protein 1 from Lottia gigantea (Giant owl limpet).